The following is a 710-amino-acid chain: Pentatricopeptide repeat-containing protein At5g39680 (710 aa).

Residue serine 2 is modified to N-acetylserine. PPR repeat units lie at residues 35-64, 68-98, 99-133, 135-169, 170-200, 201-235, 236-270, 271-301, 302-336, 337-371, 372-402, 403-437, 438-473, and 474-504; these read NELL…NQSS, DAYQ…MPER, NVVS…GESR, NEFV…GLIS, HEFV…LPYC, DLSV…DFVW, NNLT…GFNA, EVEA…THAQ, NIFL…EVPP, NEYT…GYRN, HVMV…MTFR, DIVT…GEIP, NRIT…DVQP, and DIQH…APIE. The segment at 509-584 is type E motif; sequence AWRTLLNACY…EPGVSWIGIR (76 aa). Positions 585–615 are type E(+) motif; that stretch reads NQTHVFLAEDNQHPEITLIYAKVKEVMSKIK. The interval 616-710 is type DYW motif; it reads PLGYSPDVAG…DGQCSCCDYW (95 aa).

This sequence belongs to the PPR family. PCMP-H subfamily.

In Arabidopsis thaliana (Mouse-ear cress), this protein is Pentatricopeptide repeat-containing protein At5g39680 (EMB2744).